Reading from the N-terminus, the 89-residue chain is uncharacterized protein (89 aa).

3 consecutive transmembrane segments (helical) span residues I9–I29, I35–L55, and I65–S85.

It localises to the membrane. This is an uncharacterized protein from Schizosaccharomyces pombe (strain 972 / ATCC 24843) (Fission yeast).